Consider the following 135-residue polypeptide: Sex-regulated protein janus-A (135 aa).

A substrate-binding site is contributed by Lys-37. His-63 acts as the Proton acceptor in catalysis. 104 to 106 serves as a coordination point for substrate; it reads SQG.

The protein belongs to the janus family.

Functionally, janA and janB regulate somatic sex differentiation. The polypeptide is Sex-regulated protein janus-A (janA) (Drosophila yakuba (Fruit fly)).